We begin with the raw amino-acid sequence, 559 residues long: Serine/threonine-protein kinase bur1 (559 aa).

A Protein kinase domain is found at 40–341 (YEVLGKLGEG…AIDALNHPYF (302 aa)). ATP-binding positions include 46–54 (LGEGTFGEV) and Lys-69. Asp-171 serves as the catalytic Proton acceptor. Over residues 359–372 (SHEFDRRKFQDRKA) the composition is skewed to basic and acidic residues. Residues 359–559 (SHEFDRRKFQ…GRDRDAYARR (201 aa)) form a disordered region. Residues 400–414 (GRDGYGGGGRNGANG) show a composition bias toward gly residues. Composition is skewed to basic and acidic residues over residues 457 to 467 (DHTDGYRDRPP), 491 to 534 (YDRD…DSRT), and 543 to 559 (PVRD…YARR).

This sequence belongs to the protein kinase superfamily. CMGC Ser/Thr protein kinase family. CDC2/CDKX subfamily.

The protein resides in the nucleus. The catalysed reaction is L-seryl-[protein] + ATP = O-phospho-L-seryl-[protein] + ADP + H(+). It carries out the reaction L-threonyl-[protein] + ATP = O-phospho-L-threonyl-[protein] + ADP + H(+). The enzyme catalyses [DNA-directed RNA polymerase] + ATP = phospho-[DNA-directed RNA polymerase] + ADP + H(+). Serine/threonine-protein kinase involved in transcription regulation. Phosphorylates the mus-8/ubc2 ubiquitin-conjugating enzyme (E2), leading to monoubiquitination of histone H2B and the silencing of telomeric-associated genes. Also required for histone H3 methylation. Necessary for the recovery from pheromone-induced growth arrest in the cell cycle G1 phase. The chain is Serine/threonine-protein kinase bur1 (stk-1) from Neurospora crassa (strain ATCC 24698 / 74-OR23-1A / CBS 708.71 / DSM 1257 / FGSC 987).